The chain runs to 731 residues: Gelsolin (731 aa).

Positions 2–125 are actin-severing; the sequence is VVEHPEFLKA…YKKGGVASGF (124 aa). One copy of the Gelsolin-like 1 repeat lies at 25–107; it reads FDLVPVPPNL…VQGFESATFL (83 aa). Tyr35 carries the phosphotyrosine modification. Ca(2+)-binding residues include Gly41, Asp42, Glu73, Asp85, Gly90, and Ala92. The interval 72-75 is actin-actin interfilament contact point; sequence DESG. 111 to 118 lines the a 1,2-diacyl-sn-glycero-3-phospho-(1D-myo-inositol-4,5-bisphosphate) pocket; that stretch reads KSGLKYKK. Residue Val121 participates in Ca(2+) binding. 137-145 serves as a coordination point for a 1,2-diacyl-sn-glycero-3-phospho-(1D-myo-inositol-4,5-bisphosphate); it reads RLLQVKGRR. A Gelsolin-like 2 repeat occupies 147 to 219; that stretch reads VRATEVPVSW…FEEGAEPEAM (73 aa). Ca(2+) is bound by residues Gly162 and Asp163. A disulfide bridge links Cys164 with Cys177. 5 residues coordinate Ca(2+): Glu185, Asp235, Glu278, Asp279, and Glu303. Residues 266 to 338 form a Gelsolin-like 3 repeat; that stretch reads DENPFAQGAL…LPEGGETPLF (73 aa). Residues Tyr358 and Tyr414 each carry the phosphotyrosine modification. An actin-binding, Ca-sensitive region spans residues 383–731; sequence AAQHGMDDDG…LDRALAELAA (349 aa). A Gelsolin-like 4 repeat occupies 404-485; it reads SNKVPVDPAT…VQGKEPAHLM (82 aa). Gly420, Asp421, Glu451, Asp463, Gly468, Pro470, and Thr500 together coordinate Ca(2+). The residue at position 533 (Lys533) is an N6-acetyllysine. The Gelsolin-like 5 repeat unit spans residues 533–591; sequence KAGALNSNDAFVLKTPSAAYLWVGAGASEAEKTGAQELLRVLRAQPVQVAEGSEPDSFW. Ca(2+) is bound by residues Asn540 and Asp541. Tyr552 carries the post-translational modification Phosphotyrosine. A Ca(2+)-binding site is contributed by Glu563. Position 600 is a phosphotyrosine (Tyr600). Residues 630–705 form a Gelsolin-like 6 repeat; that stretch reads IEEVPGEFMQ…VKQGFEPPSF (76 aa). Ca(2+) contacts are provided by Asp645, Asp646, and Glu668. Thr691 is modified (phosphothreonine).

This sequence belongs to the villin/gelsolin family. Binds to actin and to fibronectin. Identified in a complex composed of ACTA1, COBL, GSN and TMSB4X. Interacts with the inactive form of EIF2AK2/PKR. Interacts with FLII.

Its subcellular location is the cytoplasm. The protein resides in the cytoskeleton. In terms of biological role, calcium-regulated, actin-modulating protein that binds to the plus (or barbed) ends of actin monomers or filaments, preventing monomer exchange (end-blocking or capping). It can promote the assembly of monomers into filaments (nucleation) as well as sever filaments already formed. Plays a role in ciliogenesis. This is Gelsolin (GSN) from Equus caballus (Horse).